The following is a 460-amino-acid chain: MLLPEITLTLTALLSQFFAVMLQGKNRIVANITILLTILTIFIILKYSYSESVLYLDYVMFTTNANIANYKAIILIFTIISMIIYRDYSVRSGEPLKFEFITLILLSTVGIFVAISAQNFLLLFCAMELTALTSYILAGFKLSDIKSSEGALKYFILGSLVSCLSLFGISFIYGFGGSLQFSDIFYKLNDSSSVNLGLVIGVVLFLSSIFFKLSSAPLHFWAPDVYEGSPIASVTYFTAASKIGAVAILLNIENLIIKNYHPISYNLIKIIALLSMIFGALGAIRQTSLKRLMAYSTILNIGYVLIGVLLRTEDGNKAAMLYMLIYAAASIGFFTCLIMLLGNQTDKANFESIQGIAENHKAIAAAICIIMFSMIGIPPLAGFLGKYYLFYQAITQEEFLLAYFGIFTSVIAAFYYLKIIKTMYFAEKPNPTKIPISYGLLLINFVVIGFLLFGSFIISS.

The next 13 membrane-spanning stretches (helical) occupy residues 2-22, 28-48, 65-85, 104-124, 155-175, 196-216, 230-250, 263-283, 292-312, 321-341, 363-383, 400-420, and 438-458; these read LLPE…AVML, IVAN…LKYS, ANIA…MIIY, ILLS…LLLF, FILG…IYGF, LGLV…LSSA, PIAS…AILL, ISYN…ALGA, LMAY…LLRT, LYML…IMLL, IAAA…LAGF, LLAY…LKII, and YGLL…SFII.

Belongs to the complex I subunit 2 family. As to quaternary structure, NDH-1 is composed of 14 different subunits. Subunits NuoA, H, J, K, L, M, N constitute the membrane sector of the complex.

The protein resides in the cell inner membrane. It catalyses the reaction a quinone + NADH + 5 H(+)(in) = a quinol + NAD(+) + 4 H(+)(out). Its function is as follows. NDH-1 shuttles electrons from NADH, via FMN and iron-sulfur (Fe-S) centers, to quinones in the respiratory chain. The immediate electron acceptor for the enzyme in this species is believed to be ubiquinone. Couples the redox reaction to proton translocation (for every two electrons transferred, four hydrogen ions are translocated across the cytoplasmic membrane), and thus conserves the redox energy in a proton gradient. The chain is NADH-quinone oxidoreductase subunit N from Rickettsia bellii (strain RML369-C).